Reading from the N-terminus, the 169-residue chain is Peptide deformylase (169 aa).

2 residues coordinate Fe cation: Cys-91 and His-133. Glu-134 is a catalytic residue. His-137 serves as a coordination point for Fe cation.

Belongs to the polypeptide deformylase family. Fe(2+) serves as cofactor.

It catalyses the reaction N-terminal N-formyl-L-methionyl-[peptide] + H2O = N-terminal L-methionyl-[peptide] + formate. In terms of biological role, removes the formyl group from the N-terminal Met of newly synthesized proteins. Requires at least a dipeptide for an efficient rate of reaction. N-terminal L-methionine is a prerequisite for activity but the enzyme has broad specificity at other positions. The chain is Peptide deformylase from Klebsiella pneumoniae (strain 342).